Here is a 463-residue protein sequence, read N- to C-terminus: Soluble pyridine nucleotide transhydrogenase (463 aa).

35–44 (EKQQAVGGNC) provides a ligand contact to FAD.

It belongs to the class-I pyridine nucleotide-disulfide oxidoreductase family. It depends on FAD as a cofactor.

Its subcellular location is the cytoplasm. The catalysed reaction is NAD(+) + NADPH = NADH + NADP(+). Its function is as follows. Conversion of NADPH, generated by peripheral catabolic pathways, to NADH, which can enter the respiratory chain for energy generation. The sequence is that of Soluble pyridine nucleotide transhydrogenase from Chromohalobacter salexigens (strain ATCC BAA-138 / DSM 3043 / CIP 106854 / NCIMB 13768 / 1H11).